The primary structure comprises 568 residues: Acyl-CoA ligase gloD (568 aa).

ATP is bound by residues 211–219 (TSGTSGFLK), 352–357 (PGYGLT), Asp436, Arg455, and Lys553. The SBD1 stretch occupies residues 282 to 352 (DMQIALKSVQ…QLCPEWEINP (71 aa)). Residues 353 to 415 (GYGLTESFVC…VRSPSVMKEY (63 aa)) are SBD2.

It belongs to the ATP-dependent AMP-binding enzyme family.

It participates in mycotoxin biosynthesis. Acyl-CoA ligase; part of the gene cluster that mediates the biosynthesis of pneumocandins, lipohexapeptides of the echinocandin family that prevent fungal cell wall formation by non-competitive inhibition of beta-1,3-glucan synthase. The 10,12-dimethylmyristoyl side chain is synthesized by the reducing polyketide synthase gloL/GLPKS4. The thioesterase gloN/GLHYD exclusively interacts with gloL/GLPKS4 to maintain turnover of the polyketide side chain. The 10R,12S-dimethylmyristic acid is then transferred to the first thiolation domain of the nonribosomal peptide synthetase gloA/GLNRPS4 by the acyl-AMP ligase gloD/GLligase, followed by its acylation to L-ornithine to trigger elongation of the cyclic hexapeptide. L-ornithine, 4R-hydroxyl-L-proline (generated from L-proline by the dioxygenase gloF/GLOXY2), 3S-hydroxyl-L-homotyrosine (generated by gloG/GLHtyB, gloH/GLHtyA, gloI/GLHtyC, gloJ/GLHtyD and hydroxylated at C-3 by the dioxygenase gloM/GLOXY1), 3R-hydroxyl-L-glutamine (generated from L-glutamine probably by the dioxygenase gloE/GLOXY3) and 3S-hydroxyl-L-proline (generated from L-proline by the dioxygenase gloF/GLOXY2 to yield pneumocandin B0), or 3S-hydroxyl-4S-methyl-L-proline (generated from L-leucine by the dioxygenase gloC/GLOXY4 to yield pneumocandin A0) are sequentially added to the growing chain. The last C domain of gloA/GLNRPS4 is proposed to be responsible for cyclization by condensation to form the peptide bond between L-ornithine and 3S-hydroxyl-4S-methyl-L-proline (for pneumocandin A0) or 3S-hydroxyl-L-proline (for pneumocandin B0). Finally, the subsequent C-4 hydroxylation of 3S-hydroxyl-L-homotyrosine and L-ornithine dihydroxylation at C-4 and C-5 are performed by the cytochrome P450 monooxygenases gloP/GLP450-1 and gloO/GLP450-2, respectively. The chain is Acyl-CoA ligase gloD from Glarea lozoyensis (strain ATCC 20868 / MF5171).